Here is a 327-residue protein sequence, read N- to C-terminus: Vacuolar protein sorting-associated protein 26A (327 aa).

The interval 305–327 is disordered; the sequence is RNFHQRYESPEPRPSLSAEQPEM.

Belongs to the VPS26 family. As to quaternary structure, component of the heterotrimeric retromer cargo-selective complex (CSC) which is believed to associate with variable sorting nexins to form functionally distinct retromer complex variants.

It localises to the cytoplasm. Its subcellular location is the endosome membrane. The protein resides in the early endosome. Acts as a component of the retromer cargo-selective complex (CSC). The CSC is believed to be the core functional component of retromer or respective retromer complex variants acting to prevent missorting of selected transmembrane cargo proteins into the lysosomal degradation pathway. Retromer mediates retrograde transport of cargo proteins from endosomes to the trans-Golgi network (TGN). The polypeptide is Vacuolar protein sorting-associated protein 26A (vps26a) (Danio rerio (Zebrafish)).